The primary structure comprises 154 residues: uncharacterized protein (154 aa).

The region spanning 7 to 143 is the HTH marR-type domain; that stretch reads RSELEKTAVQ…IFSFVGKAAD (137 aa). The H-T-H motif DNA-binding region spans 57-80; that stretch reads AGELGKKTGLSTGSVTALVDRLEK.

This is an uncharacterized protein from Bacillus subtilis (strain 168).